Consider the following 637-residue polypeptide: Probable potassium transport system protein Kup (637 aa).

12 consecutive transmembrane segments (helical) span residues Ile25 to Ile45, Val62 to Leu82, Trp115 to Thr135, Ile149 to Leu169, Val180 to Leu200, Leu227 to Tyr247, Ile263 to Phe283, Leu295 to Ala315, Ile352 to Phe372, Leu378 to Tyr398, Leu410 to Ser430, and Leu434 to Thr454.

It belongs to the HAK/KUP transporter (TC 2.A.72) family.

The protein resides in the cell inner membrane. The enzyme catalyses K(+)(in) + H(+)(in) = K(+)(out) + H(+)(out). Its function is as follows. Transport of potassium into the cell. Likely operates as a K(+):H(+) symporter. The polypeptide is Probable potassium transport system protein Kup (Chlorobium phaeobacteroides (strain DSM 266 / SMG 266 / 2430)).